A 156-amino-acid polypeptide reads, in one-letter code: Cyclin-dependent protein kinase inhibitor SMR10 (156 aa).

Residues 52-90 (QDQDLEPKSQETNNCSRKEGATVKKEEEEEDDYCKTPTR) form a disordered region. Basic and acidic residues predominate over residues 67-77 (SRKEGATVKKE).

Its function is as follows. Probable cyclin-dependent protein kinase (CDK) inhibitor that functions as a repressor of mitosis in the endoreduplication cell cycle. This chain is Cyclin-dependent protein kinase inhibitor SMR10, found in Arabidopsis thaliana (Mouse-ear cress).